The following is a 462-amino-acid chain: Lysyl endopeptidase (462 aa).

A signal peptide spans 1 to 24 (MHKRTYLNACLVLALAAGASQALA). The propeptide occupies 25–211 (APGASEMAGD…VSYFADSLYK (187 aa)). 3 cysteine pairs are disulfide-bonded: cysteine 224–cysteine 435, cysteine 230–cysteine 305, and cysteine 262–cysteine 284. Residues histidine 283, aspartate 333, and serine 409 each act as charge relay system in the active site.

The protein belongs to the peptidase S1 family. Experiments performed in E.coli. Processing of pro-endopeptidase to mature endopeptidase is probably autocatalytic, as mutations in the probable active site residues prevent processing, and purified inactive pro-endopeptidase disappears in the presence of active endopeptidase.

It is found in the secreted. It catalyses the reaction Preferential cleavage: Lys-|-Xaa, including Lys-|-Pro.. Lysine-specific endoprotease. Involved in corneal virulence. The protein is Lysyl endopeptidase (prpL) of Pseudomonas aeruginosa (strain ATCC 15692 / DSM 22644 / CIP 104116 / JCM 14847 / LMG 12228 / 1C / PRS 101 / PAO1).